The following is a 96-amino-acid chain: Ferredoxin (96 aa).

Positions 4-94 (YKVKLLTPEG…DVVIETHKEE (91 aa)) constitute a 2Fe-2S ferredoxin-type domain. Residues Cys40, Cys45, Cys48, and Cys78 each contribute to the [2Fe-2S] cluster site.

The protein belongs to the 2Fe2S plant-type ferredoxin family. It depends on [2Fe-2S] cluster as a cofactor.

The protein resides in the plastid. The protein localises to the chloroplast. Functionally, ferredoxins are iron-sulfur proteins that transfer electrons in a wide variety of metabolic reactions. In Panax ginseng (Korean ginseng), this protein is Ferredoxin.